Here is a 486-residue protein sequence, read N- to C-terminus: Citrate synthase 3, mitochondrial (486 aa).

The N-terminal 23 residues, 1 to 23 (MVQRLLPGAHICRRSFNSSAIIK), are a transit peptide targeting the mitochondrion. Catalysis depends on residues H315, H361, and D419. The Microbody targeting signal signature appears at 484 to 486 (NKL).

The protein belongs to the citrate synthase family.

It is found in the mitochondrion. The enzyme catalyses oxaloacetate + acetyl-CoA + H2O = citrate + CoA + H(+). It participates in carbohydrate metabolism; tricarboxylic acid cycle; isocitrate from oxaloacetate: step 1/2. Its function is as follows. Dual specificity mitochondrial citrate and methylcitrate synthase with similar catalytic efficiency with both acetyl-CoA and propionyl-CoA. The sequence is that of Citrate synthase 3, mitochondrial from Saccharomyces cerevisiae (strain ATCC 204508 / S288c) (Baker's yeast).